The primary structure comprises 374 residues: Layilin (374 aa).

The N-terminal stretch at 1-24 (MQPGPALQAVLLAVLLSEPRSSKG) is a signal peptide. At 25 to 221 (RLLSGQLVCR…TKETFKESRE (197 aa)) the chain is on the extracellular side. Positions 37–177 (TRRPCYKVIY…CNMKNNFICK (141 aa)) constitute a C-type lectin domain. 2 disulfide bridges follow: Cys-63–Cys-176 and Cys-142–Cys-168. Residue Asn-109 is glycosylated (N-linked (GlcNAc...) asparagine). The segment at 184-212 (STTPSIRPGGEATEPPTPVLPEETQKEDT) is disordered. A helical transmembrane segment spans residues 222–242 (AALNLAYILIPSIPLFLLLVV). Topologically, residues 243 to 374 (TSAACWVWIC…SGWVENEIYY (132 aa)) are cytoplasmic. Ser-279 and Ser-292 each carry phosphoserine. The tract at residues 323 to 367 (DYDNMAVNPSESGFVTLASMESGFVTNDIYEFSPDRMGRSKESGW) is interaction with NF2. The interaction with TLN1 stretch occupies residues 330–374 (NPSESGFVTLASMESGFVTNDIYEFSPDRMGRSKESGWVENEIYY). 5 consecutive repeat copies span residues 333-337 (ESGFV), 343-347 (ESGFV), 349-352 (NDIY), 364-368 (ESGWV), and 370-373 (NEIY). The 3 X 5 AA repeats of E-S-G-X-V stretch occupies residues 333-368 (ESGFVTLASMESGFVTNDIYEFSPDRMGRSKESGWV). Residues 349-373 (NDIYEFSPDRMGRSKESGWVENEIY) are 2 X 4 AA repeats of N-X-I-Y.

In terms of assembly, interacts with NF2 and RDX. Interacts with TLN1. As to expression, widely expressed. Abundant in the ovary.

The protein localises to the membrane. Functionally, receptor for hyaluronate. The sequence is that of Layilin (LAYN) from Cricetulus griseus (Chinese hamster).